The chain runs to 108 residues: Nucleoid-associated protein HCH_02614 (108 aa).

The protein belongs to the YbaB/EbfC family. As to quaternary structure, homodimer.

The protein resides in the cytoplasm. Its subcellular location is the nucleoid. Binds to DNA and alters its conformation. May be involved in regulation of gene expression, nucleoid organization and DNA protection. The sequence is that of Nucleoid-associated protein HCH_02614 from Hahella chejuensis (strain KCTC 2396).